The chain runs to 40 residues: Snaclec tokaracetin subunit beta (40 aa).

A disulfide bond links C2 and C13. A C-type lectin domain is found at 9–40 (YDEHCYRVFQQKMNWEDAEKFCTQQHKGXHLX).

This sequence belongs to the snaclec family. As to quaternary structure, heterodimer of subunits alpha and beta; disulfide-linked. Expressed by the venom gland.

The protein localises to the secreted. Functionally, platelet antagonist that specifically and reversibly binds to a site on platelet glycoprotein Ibalpha (GP1BA) close to or identical with the site for vWF binding. It inhibits the binding of vWF to platelets and vWF-dependent shear-induced platelet aggregation. The sequence is that of Snaclec tokaracetin subunit beta from Protobothrops tokarensis (Tokara habu).